A 122-amino-acid polypeptide reads, in one-letter code: Large ribosomal subunit protein uL14 (122 aa).

Belongs to the universal ribosomal protein uL14 family. As to quaternary structure, part of the 50S ribosomal subunit. Forms a cluster with proteins L3 and L19. In the 70S ribosome, L14 and L19 interact and together make contacts with the 16S rRNA in bridges B5 and B8.

In terms of biological role, binds to 23S rRNA. Forms part of two intersubunit bridges in the 70S ribosome. The protein is Large ribosomal subunit protein uL14 of Shewanella woodyi (strain ATCC 51908 / MS32).